A 348-amino-acid chain; its full sequence is Casein kinase II subunit alpha (348 aa).

Positions 55–340 (YEIVRKIGRG…PLEAMEHPFF (286 aa)) constitute a Protein kinase domain. Residues 61 to 69 (IGRGKFSEV) and K84 each bind ATP. The active-site Proton acceptor is the D172.

This sequence belongs to the protein kinase superfamily. Ser/Thr protein kinase family. CK2 subfamily. Tetramer of two alpha and two beta chains.

It is found in the cytoplasm. The enzyme catalyses L-seryl-[protein] + ATP = O-phospho-L-seryl-[protein] + ADP + H(+). The catalysed reaction is L-threonyl-[protein] + ATP = O-phospho-L-threonyl-[protein] + ADP + H(+). Casein kinases are operationally defined by their preferential utilization of acidic proteins such as caseins as substrates. The alpha chain contains the catalytic site. This chain is Casein kinase II subunit alpha, found in Theileria annulata.